Here is a 955-residue protein sequence, read N- to C-terminus: 2-oxoglutarate dehydrogenase E1 component (955 aa).

It belongs to the alpha-ketoglutarate dehydrogenase family. In terms of assembly, homodimer. Part of the 2-oxoglutarate dehydrogenase (OGDH) complex composed of E1 (2-oxoglutarate dehydrogenase), E2 (dihydrolipoamide succinyltransferase) and E3 (dihydrolipoamide dehydrogenase); the complex contains multiple copies of the three enzymatic components (E1, E2 and E3). The cofactor is thiamine diphosphate.

The catalysed reaction is N(6)-[(R)-lipoyl]-L-lysyl-[protein] + 2-oxoglutarate + H(+) = N(6)-[(R)-S(8)-succinyldihydrolipoyl]-L-lysyl-[protein] + CO2. E1 component of the 2-oxoglutarate dehydrogenase (OGDH) complex which catalyzes the decarboxylation of 2-oxoglutarate, the first step in the conversion of 2-oxoglutarate to succinyl-CoA and CO(2). The polypeptide is 2-oxoglutarate dehydrogenase E1 component (Bacillus cereus (strain G9842)).